The following is a 223-amino-acid chain: Na(+)-translocating NADH-quinone reductase subunit D (223 aa).

5 consecutive transmembrane segments (helical) span residues 42 to 62 (TVMAIALTLVTGFSNLFISMI), 66 to 86 (IPSSIRMIVQMVIIASLVIVV), 103 to 123 (VFVGLIITNCIVMGRAEAFAM), 131 to 151 (FFDGIGNGLGYSAMLLVLGFI), and 178 to 198 (NGLLLLPPSAFFLIGLIIWAL).

It belongs to the NqrDE/RnfAE family. In terms of assembly, composed of six subunits; NqrA, NqrB, NqrC, NqrD, NqrE and NqrF.

It localises to the cell inner membrane. The catalysed reaction is a ubiquinone + n Na(+)(in) + NADH + H(+) = a ubiquinol + n Na(+)(out) + NAD(+). Functionally, NQR complex catalyzes the reduction of ubiquinone-1 to ubiquinol by two successive reactions, coupled with the transport of Na(+) ions from the cytoplasm to the periplasm. NqrA to NqrE are probably involved in the second step, the conversion of ubisemiquinone to ubiquinol. This chain is Na(+)-translocating NADH-quinone reductase subunit D, found in Pseudomonas paraeruginosa (strain DSM 24068 / PA7) (Pseudomonas aeruginosa (strain PA7)).